Consider the following 77-residue polypeptide: Dermatoxin-B1 (77 aa).

A signal peptide spans 1–22; sequence MAFLKKSLFLVLFLGLVPLSLC. A propeptide spanning residues 23–42 is cleaved from the precursor; the sequence is ESEKREGENEEEQEDDQSEE. Residues 24 to 45 are disordered; that stretch reads SEKREGENEEEQEDDQSEEKRS. The segment covering 30 to 40 has biased composition (acidic residues); the sequence is ENEEEQEDDQS. Residue Gln-76 is modified to Glutamine amide.

The protein belongs to the frog skin active peptide (FSAP) family. Dermatoxin subfamily. In terms of tissue distribution, highest expression in skin and to a lesser extent in brain and intestine.

It is found in the secreted. It localises to the target cell membrane. In terms of biological role, possesses a potent antimicrobial activity against Gram-positive bacteria B.megaterium, C.glutamicum and S.aureus and mollicutes A.laidlawii and S.melliferum. Less active against Gram-negative bacteria B.cepacia, P.aeruginosa, S.typhimurium and S.meliloti. Probably acts by disturbing membrane functions with its amphipathic structure. The sequence is that of Dermatoxin-B1 from Phyllomedusa bicolor (Two-colored leaf frog).